A 511-amino-acid polypeptide reads, in one-letter code: Maturase K (511 aa).

This sequence belongs to the intron maturase 2 family. MatK subfamily.

It localises to the plastid. The protein resides in the chloroplast. Its function is as follows. Usually encoded in the trnK tRNA gene intron. Probably assists in splicing its own and other chloroplast group II introns. The protein is Maturase K of Psathyrostachys juncea (Russian wildrye).